We begin with the raw amino-acid sequence, 170 residues long: UPF0316 protein CLJ_B0679 (170 aa).

The next 2 membrane-spanning stretches (helical) occupy residues 1–21 (MLSY…LMTI) and 36–56 (IIGF…LSGI).

Belongs to the UPF0316 family.

Its subcellular location is the cell membrane. This Clostridium botulinum (strain 657 / Type Ba4) protein is UPF0316 protein CLJ_B0679.